Reading from the N-terminus, the 56-residue chain is MKYFLSATFLIIIFLYAIYFCVFIIVNNARVRRNLFYQYNYIPAALLSTVRVHGLK.

This is an uncharacterized protein from Orgyia pseudotsugata (Douglas-fir tussock moth).